Here is a 74-residue protein sequence, read N- to C-terminus: uncharacterized protein (74 aa).

Disordered stretches follow at residues 1–26 (MNGP…SGVF) and 46–74 (ITNS…SFTQ). Residues 34–50 (VSNKSIMLISLKITNSP) traverse the membrane as a helical segment. The segment covering 47–74 (TNSPNSNSRGSSSSSSTSKSSSKTSFTQ) has biased composition (low complexity).

It is found in the membrane. This is an uncharacterized protein from Dictyostelium discoideum (Social amoeba).